Consider the following 201-residue polypeptide: Small ribosomal subunit protein uS4c (201 aa).

Positions 15 to 44 (LGALPGLTNKRPRAGSDLRNQSRSGKKSQY) are disordered. Residues 89-150 (MRLDNILFRL…EQKSKVLIQN (62 aa)) form the S4 RNA-binding domain.

The protein belongs to the universal ribosomal protein uS4 family. In terms of assembly, part of the 30S ribosomal subunit. Contacts protein S5. The interaction surface between S4 and S5 is involved in control of translational fidelity.

It localises to the plastid. Its subcellular location is the chloroplast. Its function is as follows. One of the primary rRNA binding proteins, it binds directly to 16S rRNA where it nucleates assembly of the body of the 30S subunit. With S5 and S12 plays an important role in translational accuracy. In Lactuca sativa (Garden lettuce), this protein is Small ribosomal subunit protein uS4c (rps4).